We begin with the raw amino-acid sequence, 439 residues long: Serine hydroxymethyltransferase (439 aa).

Residues 1–20 (MNAPHRDETTASHRDDGFFT) are disordered. (6S)-5,6,7,8-tetrahydrofolate-binding positions include L136 and 140 to 142 (GHL). N6-(pyridoxal phosphate)lysine is present on K245.

The protein belongs to the SHMT family. In terms of assembly, homodimer. It depends on pyridoxal 5'-phosphate as a cofactor.

The protein resides in the cytoplasm. It carries out the reaction (6R)-5,10-methylene-5,6,7,8-tetrahydrofolate + glycine + H2O = (6S)-5,6,7,8-tetrahydrofolate + L-serine. It functions in the pathway one-carbon metabolism; tetrahydrofolate interconversion. The protein operates within amino-acid biosynthesis; glycine biosynthesis; glycine from L-serine: step 1/1. Catalyzes the reversible interconversion of serine and glycine with tetrahydrofolate (THF) serving as the one-carbon carrier. This reaction serves as the major source of one-carbon groups required for the biosynthesis of purines, thymidylate, methionine, and other important biomolecules. Also exhibits THF-independent aldolase activity toward beta-hydroxyamino acids, producing glycine and aldehydes, via a retro-aldol mechanism. The chain is Serine hydroxymethyltransferase from Jannaschia sp. (strain CCS1).